Consider the following 257-residue polypeptide: G2/mitotic-specific cyclin S13-7 (257 aa).

It belongs to the cyclin family. Cyclin AB subfamily. In terms of assembly, interacts with the CDC2 protein kinase to form a serine/threonine kinase holoenzyme complex also known as maturation promoting factor (MPF). The cyclin subunit imparts substrate specificity to the complex.

Its function is as follows. Essential for the control of the cell cycle at the G2/M (mitosis) transition. The chain is G2/mitotic-specific cyclin S13-7 from Glycine max (Soybean).